A 275-amino-acid chain; its full sequence is Nuclear egress protein 2 (275 aa).

The Perinuclear space segment spans residues 1–251; sequence MAGLGKPYTG…GLKHLRIGPP (251 aa). An interaction with NEC1 region spans residues 137–181; the sequence is KGRLGLDARPMMASMWISCFVRMPRVQLAFRFMGPEDAGRTRRIL. A helical transmembrane segment spans residues 252-272; the sequence is ALVLAAGLVLGAAIWWVVGAG. Over 273–275 the chain is Nuclear; the sequence is ARL.

This sequence belongs to the herpesviridae NEC2 protein family. Forms a heterohexameric complex with NEC1. Interacts with glycoprotein D; this interaction recruits glycoprotein D and glycoprotein M to the inner nuclear membrane. Phosphorylated by viral kinase US3.

Its subcellular location is the host nucleus inner membrane. In terms of biological role, plays an essential role in virion nuclear egress, the first step of virion release from infected cell. Within the host nucleus, NEC1 interacts with the newly formed capsid through the vertexes and directs it to the inner nuclear membrane by associating with NEC2. Induces the budding of the capsid at the inner nuclear membrane as well as its envelopment into the perinuclear space. There, the NEC1/NEC2 complex promotes the fusion of the enveloped capsid with the outer nuclear membrane and the subsequent release of the viral capsid into the cytoplasm where it will reach the secondary budding sites in the host Golgi or trans-Golgi network. The protein is Nuclear egress protein 2 of Homo sapiens (Human).